The chain runs to 156 residues: Ribosomal RNA large subunit methyltransferase H (156 aa).

Residues Leu-73, Gly-104, and 123-128 contribute to the S-adenosyl-L-methionine site; that span reads LSSLTL.

The protein belongs to the RNA methyltransferase RlmH family. In terms of assembly, homodimer.

It is found in the cytoplasm. It catalyses the reaction pseudouridine(1915) in 23S rRNA + S-adenosyl-L-methionine = N(3)-methylpseudouridine(1915) in 23S rRNA + S-adenosyl-L-homocysteine + H(+). In terms of biological role, specifically methylates the pseudouridine at position 1915 (m3Psi1915) in 23S rRNA. This is Ribosomal RNA large subunit methyltransferase H from Ralstonia nicotianae (strain ATCC BAA-1114 / GMI1000) (Ralstonia solanacearum).